Consider the following 597-residue polypeptide: uncharacterized protein (597 aa).

The segment covering 1–23 (MSHEGSRQARDRGVTRSKAEKAR) has biased composition (basic and acidic residues). Disordered regions lie at residues 1-32 (MSHEGSRQARDRGVTRSKAEKARPPTQPVPQV) and 171-192 (RESQEPTQSSEPSAEPRVNPRP). Residues 175 to 186 (EPTQSSEPSAEP) are compositionally biased toward low complexity. Residues Ser-237 and Ser-241 each carry the phosphoserine modification. Disordered stretches follow at residues 302–335 (SLLSVPTPDGPSPFLQPGGMERRPSHKTPTMRLD) and 549–569 (EAEEGTPQAPEQQPIQTGVSK). The segment covering 557-568 (APEQQPIQTGVS) has biased composition (polar residues).

This is an uncharacterized protein from Rattus norvegicus (Rat).